We begin with the raw amino-acid sequence, 458 residues long: Tyrosine phenol-lyase (458 aa).

Residue K258 is modified to N6-(pyridoxal phosphate)lysine.

It belongs to the beta-eliminating lyase family. Homotetramer. Pyridoxal 5'-phosphate is required as a cofactor.

It carries out the reaction L-tyrosine + H2O = phenol + pyruvate + NH4(+). This Symbiobacterium sp. (strain SC-1) protein is Tyrosine phenol-lyase (tpl).